We begin with the raw amino-acid sequence, 160 residues long: Phosphopantetheine adenylyltransferase (160 aa).

A substrate-binding site is contributed by Ser9. Residues 9-10 and His17 contribute to the ATP site; that span reads SF. Positions 41, 73, and 87 each coordinate substrate. ATP is bound by residues 88–90, Glu98, and 122–128; these read GLR and YSFVSSS.

The protein belongs to the bacterial CoaD family. Homohexamer. The cofactor is Mg(2+).

Its subcellular location is the cytoplasm. The enzyme catalyses (R)-4'-phosphopantetheine + ATP + H(+) = 3'-dephospho-CoA + diphosphate. It participates in cofactor biosynthesis; coenzyme A biosynthesis; CoA from (R)-pantothenate: step 4/5. Reversibly transfers an adenylyl group from ATP to 4'-phosphopantetheine, yielding dephospho-CoA (dPCoA) and pyrophosphate. This chain is Phosphopantetheine adenylyltransferase, found in Mycobacterium leprae (strain TN).